The chain runs to 686 residues: UvrABC system protein C (686 aa).

Over residues 1 to 14 the composition is skewed to basic and acidic residues; it reads MVHDSTDDPDDTRV. Positions 1-48 are disordered; it reads MVHDSTDDPDDTRVRKSRRGTALDAPPQETAPPDLDPATTGGDDEDDA. Residues 81–160 form the GIY-YIG domain; that stretch reads TSPGVYRMLN…IKQLRPRFNV (80 aa). Residues 270-305 enclose the UVR domain; the sequence is HAVKQELAGEMEKAANELEFETAALYRDRLAALSAI.

This sequence belongs to the UvrC family. Interacts with UvrB in an incision complex.

Its subcellular location is the cytoplasm. Its function is as follows. The UvrABC repair system catalyzes the recognition and processing of DNA lesions. UvrC both incises the 5' and 3' sides of the lesion. The N-terminal half is responsible for the 3' incision and the C-terminal half is responsible for the 5' incision. The sequence is that of UvrABC system protein C from Bradyrhizobium diazoefficiens (strain JCM 10833 / BCRC 13528 / IAM 13628 / NBRC 14792 / USDA 110).